We begin with the raw amino-acid sequence, 215 residues long: HTH-type transcriptional repressor FabR (215 aa).

In terms of domain architecture, HTH tetR-type spans 10–70 (KTRRSLVEAA…TMVDESGLML (61 aa)). Residues 33–52 (SLREVAREAGIAPTSFYRHF) constitute a DNA-binding region (H-T-H motif).

Homodimer.

It localises to the cytoplasm. Functionally, represses the transcription of fabB, involved in unsaturated fatty acid (UFA) biosynthesis. By controlling UFA production, FabR directly influences the physical properties of the membrane bilayer. This Escherichia coli O9:H4 (strain HS) protein is HTH-type transcriptional repressor FabR.